The primary structure comprises 391 residues: MADIDNKEQSELDQDLDDVEEVEEEETGEETKIKARQLTVQMMQNPQILAALQERLDGLVETPTGYIESLPRVVKRRVNALKNLQVKCAQIEAKFYEEVHDLERKYAVLYQPLFDKRFEIINAIYEPTEEECEWKPDEEDEISEELKEKAKVEDEKKDEEKEDPKGIPEFWLTVFKNVDLLSDMVQEHDEPILKHLKDIKVKFSDAGQPMSFVLEFHFEPNEYFTNEVLTKTYRMRSEPDDSDPFSFDGPEIMGCTGCQIDWKKGKNVTLKTIKKKQKHKGRGTVRTVTKTVSNDSFFNFFAPPEVPESGDLDDDSEAILAADFEIGHFLRERIIPRSVLYFTGEAIEDDDDDYDEEGEEADEEGEEEGDEENDPDYDPKKDQNPAECKQQ.

The segment covering 1–10 (MADIDNKEQS) has biased composition (basic and acidic residues). A disordered region spans residues 1 to 32 (MADIDNKEQSELDQDLDDVEEVEEEETGEETK). Ala2 bears the N-acetylalanine mark. A Phosphoserine modification is found at Ser10. Residues 11-28 (ELDQDLDDVEEVEEEETG) show a composition bias toward acidic residues. Phosphothreonine occurs at positions 62 and 64. At Ser69 the chain carries Phosphoserine. At Lys116 the chain carries N6-acetyllysine. An NAP1L motif motif is present at residues 125–150 (YEPTEEECEWKPDEEDEISEELKEKA). A compositionally biased stretch (acidic residues) spans 132-143 (CEWKPDEEDEIS). A disordered region spans residues 132–163 (CEWKPDEEDEISEELKEKAKVEDEKKDEEKED). Ser143 carries the phosphoserine modification. The span at 144–163 (EELKEKAKVEDEKKDEEKED) shows a compositional bias: basic and acidic residues. The short motif at 273-279 (IKKKQKH) is the Nuclear localization signal element. Residues 345-391 (EAIEDDDDDYDEEGEEADEEGEEEGDEENDPDYDPKKDQNPAECKQQ) form a disordered region. Positions 346-376 (AIEDDDDDYDEEGEEADEEGEEEGDEENDPD) are enriched in acidic residues. Glu359 and Glu360 each carry 5-glutamyl polyglycine. Basic and acidic residues predominate over residues 377–391 (YDPKKDQNPAECKQQ). Cys388 is modified (cysteine methyl ester). Residue Cys388 is the site of S-farnesyl cysteine attachment. Positions 389-391 (KQQ) are cleaved as a propeptide — removed in mature form.

It belongs to the nucleosome assembly protein (NAP) family. In terms of assembly, homodimer. The dimer binds strongly and sequentially to single and double H2A-H2B heterodimers. Interacts with ERCC6; this interaction increases ERCC6 processivity. Interacts with RAD54. Interacts with SETD1A. Post-translationally, polyglycylated by TTLL10 on glutamate residues, resulting in polyglycine chains on the gamma-carboxyl group. Both polyglutamylation and polyglycylation modifications can coexist on the same protein on adjacent residues, and lowering polyglycylation levels increases polyglutamylation, and reciprocally. In terms of processing, polyglutamylated by TTLL4 on glutamate residues, resulting in polyglutamate chains on the gamma-carboxyl group. Both polyglutamylation and polyglycylation modifications can coexist on the same protein on adjacent residues, and lowering polyglycylation levels increases polyglutamylation, and reciprocally.

The protein resides in the nucleus. The protein localises to the melanosome. It is found in the cytoplasm. Its function is as follows. Histone chaperone that plays a role in the nuclear import of H2A-H2B and nucleosome assembly. Also participates in several important DNA repair mechanisms: greatly enhances ERCC6-mediated chromatin remodeling which is essential for transcription-coupled nucleotide excision DNA repair. Also stimulates homologous recombination (HR) by RAD51 and RAD54 which is essential in mitotic DNA double strand break (DSB) repair. Plays a key role in the regulation of embryonic neurogenesis. Promotes the proliferation of neural progenitors and inhibits neuronal differentiation during cortical development. Regulates neurogenesis via the modulation of RASSF10; regulates RASSF10 expression by promoting SETD1A-mediated H3K4 methylation at the RASSF10 promoter. The protein is Nucleosome assembly protein 1-like 1 (NAP1L1) of Bos taurus (Bovine).